The sequence spans 1243 residues: DNA polymerase II large subunit (1243 aa).

It belongs to the archaeal DNA polymerase II family. As to quaternary structure, heterodimer of a large subunit and a small subunit.

The catalysed reaction is DNA(n) + a 2'-deoxyribonucleoside 5'-triphosphate = DNA(n+1) + diphosphate. It carries out the reaction Exonucleolytic cleavage in the 3'- to 5'-direction to yield nucleoside 5'-phosphates.. Possesses two activities: a DNA synthesis (polymerase) and an exonucleolytic activity that degrades single-stranded DNA in the 3'- to 5'-direction. Has a template-primer preference which is characteristic of a replicative DNA polymerase. The chain is DNA polymerase II large subunit from Nanoarchaeum equitans (strain Kin4-M).